The sequence spans 1050 residues: TSC22 domain family protein 1 (1050 aa).

The tract at residues 1–99 (MHQPPESTAA…SQAQLQGQPL (99 aa)) is required for interaction with TGFBR1 and promotion of TGF-beta signaling. Disordered regions lie at residues 22–111 (MAHP…KKSG), 126–285 (ISSN…VSSA), 445–479 (QTPT…SVGS), 511–531 (DFSS…VQLQ), 581–609 (LAQP…QLQY), 720–740 (VQPP…PPSS), 795–847 (QLPT…GSLV), and 879–919 (SLAQ…VSDG). The span at 38-55 (ASALSAAGTGVSGAAPSS) shows a compositional bias: low complexity. Residues 58 to 71 (FPPPSSLLQPPPPA) show a composition bias toward pro residues. Over residues 85-97 (SLNLLSQAQLQGQ) the composition is skewed to low complexity. A compositionally biased stretch (acidic residues) spans 134-143 (EDTESYDDLD). Positions 217 to 241 (HPHHLHHHHHIHHGHHLHHGHHHSS) are enriched in basic residues. Ser265 carries the phosphoserine modification. A compositionally biased stretch (low complexity) spans 458–476 (TSGSSVSSSVSTLSHYTES). Pro residues predominate over residues 586 to 603 (LPYPQPAPPVQTPLPGAP). Over residues 906-919 (LSGDSGGVSAVSDG) the composition is skewed to low complexity. Positions 983–1004 (LKEQIKELIEKNSQLEQENNLL) are leucine-zipper. A disordered region spans residues 1015 to 1050 (QFQAQLQTGSPPATTQPQGTTQPPAQPASQGSGSTA). The span at 1021–1050 (QTGSPPATTQPQGTTQPPAQPASQGSGSTA) shows a compositional bias: low complexity.

Belongs to the TSC-22/Dip/Bun family. Forms homodimers. Forms heterodimers. Component of a complex composed of TSC22D1 (via N-terminus), TGFBR1 and TGFBR2; the interaction between TSC22D1 and TGFBR1 is inhibited by SMAD7 and promoted by TGFB1. Interacts with SMAD7; the interaction requires TGF-beta and the interaction is inhibited by TGFBR1. Interacts with TPT1/fortilin; interaction results in the destabilization of TSC22D1 protein and prevents TSC22D1-mediated apoptosis. Interacts with SMAD4 (via N-terminus). Interacts with ACVRL1/ALK1, ACVR1/ALK2, BMPR1A/ALK3, ACVR1B/ALK4, BMPR1B/ALK6, ACVR2A/ACTRII, and BMPR2. Interacts with SMAD6. Interacts with TFE3; the interaction is enhanced in the presence of TGF-beta. In terms of assembly, forms a heterodimer with TSC22D4/THG1. As to quaternary structure, forms a heterodimer with TSC22D4/THG1. Interacts with histone H1-2. Interacts with GNL3. As to expression, ubiquitously expressed, abundantly expressed in testis, ovary, uterus, and lung. Expressed in cardiomyocytes.

Its subcellular location is the cytoplasm. The protein resides in the nucleus. It localises to the cell membrane. It is found in the mitochondrion. Functionally, transcriptional repressor. Acts on the C-type natriuretic peptide (CNP) promoter. Acts to promote CASP3-mediated apoptosis. Positively regulates TGF-beta signaling by interacting with SMAD7 which inhibits binding of SMAD7 to TGFBR1, preventing recruitment of SMURF ubiquitin ligases to TGFBR1 and inhibiting SMURF-mediated ubiquitination and degradation of TGFBR1. Contributes to enhancement of TGF-beta signaling by binding to and modulating the transcription activator activity of SMAD4. Promotes TGF-beta-induced transcription of COL1A2; via its interaction with TFE3 at E-boxes in the gene proximal promoter. Plays a role in the repression of hematopoietic precursor cell growth. Promotes IL2 deprivation-induced apoptosis in T-lymphocytes, via repression of TSC22D3/GILZ transcription and activation of the caspase cascade. In terms of biological role, may act to negatively regulate TGFB3 signaling and thereby inhibit cell death in mammary gland cells. Its function is as follows. Positively regulates cell death in response to TGFB3 during mammary gland involution. The chain is TSC22 domain family protein 1 from Rattus norvegicus (Rat).